Here is a 424-residue protein sequence, read N- to C-terminus: Alkaline nuclease (424 aa).

The protein belongs to the baculo-herpesviridae alkaline nuclease family. As to quaternary structure, interacts with LEF-3.

The protein localises to the host nucleus. Its function is as follows. May play a role in maturation and encapsidation of viral replicated genome, by promoting DNA homologous recombination. Exhibits endonuclease and 5'-&gt;3' exonuclease activities. The endonuclease activity displays a specificity for ssDNA in vitro. The protein is Alkaline nuclease (ALK-EXO) of Orgyia pseudotsugata (Douglas-fir tussock moth).